The chain runs to 320 residues: E3 ubiquitin-protein ligase RZF1 (320 aa).

Ser-2 carries the post-translational modification N-acetylserine. Residues 186 to 227 form an RING-type; atypical zinc finger; it reads CPVCKDEFELKSEAKQMPCHHIYHSDCIVPWLVQHNSCPVCR. A disordered region spans residues 229–320; that stretch reads ELPSRGSSSS…MGYSGWPFDY (92 aa). 2 stretches are compositionally biased toward low complexity: residues 232 to 249 and 295 to 308; these read SRGSSSSTQSSQNRSTNG and QQQQQHQHQHQQQQ.

As to expression, expressed in seedlings and in flowers.

The enzyme catalyses S-ubiquitinyl-[E2 ubiquitin-conjugating enzyme]-L-cysteine + [acceptor protein]-L-lysine = [E2 ubiquitin-conjugating enzyme]-L-cysteine + N(6)-ubiquitinyl-[acceptor protein]-L-lysine.. Functionally, E3 ubiquitin-protein ligase that promotes osmotic stress and abscisic acid (ABA) responses. Negatively regulates drought-mediated control of early seedling development, probably by influencing proline content, water loss, membrane ion leakage and the expression of dehydration stress-related genes (e.g. RAB18, RD29A, RD29B, AOX1A, ERD15, ERD1, COR15A, P5CS1 and P5CR). Modulates bZIP11 accumulation during rehydration following drought. This chain is E3 ubiquitin-protein ligase RZF1, found in Arabidopsis thaliana (Mouse-ear cress).